We begin with the raw amino-acid sequence, 200 residues long: ATP-dependent Clp protease proteolytic subunit 2 (200 aa).

Serine 101 functions as the Nucleophile in the catalytic mechanism. Histidine 126 is an active-site residue.

This sequence belongs to the peptidase S14 family. As to quaternary structure, fourteen ClpP subunits assemble into 2 heptameric rings which stack back to back to give a disk-like structure with a central cavity, resembling the structure of eukaryotic proteasomes.

The protein localises to the cytoplasm. The catalysed reaction is Hydrolysis of proteins to small peptides in the presence of ATP and magnesium. alpha-casein is the usual test substrate. In the absence of ATP, only oligopeptides shorter than five residues are hydrolyzed (such as succinyl-Leu-Tyr-|-NHMec, and Leu-Tyr-Leu-|-Tyr-Trp, in which cleavage of the -Tyr-|-Leu- and -Tyr-|-Trp bonds also occurs).. Its function is as follows. Cleaves peptides in various proteins in a process that requires ATP hydrolysis. Has a chymotrypsin-like activity. Plays a major role in the degradation of misfolded proteins. This is ATP-dependent Clp protease proteolytic subunit 2 from Prochlorococcus marinus (strain NATL2A).